A 166-amino-acid chain; its full sequence is MRVLGIDPGIALTGYGIIESKNGSEFKVIDYGRIETSSSLKKSMRLLHLYTELCSIISLYQPDVVAIEELFFSKNSKTAITIGEARGVIILTCIQNNLSIYEYTPLQVKQSITGYGRADKTQIQKMVKSLLGLSEIPKPDDVADALAVAMCHILSSSSVLYQEDEV.

Catalysis depends on residues Asp7, Glu68, and Asp141. 3 residues coordinate Mg(2+): Asp7, Glu68, and Asp141.

This sequence belongs to the RuvC family. In terms of assembly, homodimer which binds Holliday junction (HJ) DNA. The HJ becomes 2-fold symmetrical on binding to RuvC with unstacked arms; it has a different conformation from HJ DNA in complex with RuvA. In the full resolvosome a probable DNA-RuvA(4)-RuvB(12)-RuvC(2) complex forms which resolves the HJ. The cofactor is Mg(2+).

It localises to the cytoplasm. It catalyses the reaction Endonucleolytic cleavage at a junction such as a reciprocal single-stranded crossover between two homologous DNA duplexes (Holliday junction).. Functionally, the RuvA-RuvB-RuvC complex processes Holliday junction (HJ) DNA during genetic recombination and DNA repair. Endonuclease that resolves HJ intermediates. Cleaves cruciform DNA by making single-stranded nicks across the HJ at symmetrical positions within the homologous arms, yielding a 5'-phosphate and a 3'-hydroxyl group; requires a central core of homology in the junction. The consensus cleavage sequence is 5'-(A/T)TT(C/G)-3'. Cleavage occurs on the 3'-side of the TT dinucleotide at the point of strand exchange. HJ branch migration catalyzed by RuvA-RuvB allows RuvC to scan DNA until it finds its consensus sequence, where it cleaves and resolves the cruciform DNA. The chain is Crossover junction endodeoxyribonuclease RuvC from Caldicellulosiruptor saccharolyticus (strain ATCC 43494 / DSM 8903 / Tp8T 6331).